The chain runs to 299 residues: Oxygen-dependent coproporphyrinogen-III oxidase (299 aa).

Substrate is bound at residue Ser-92. Positions 96 and 106 each coordinate a divalent metal cation. His-106 functions as the Proton donor in the catalytic mechanism. 108–110 serves as a coordination point for substrate; that stretch reads NVR. 2 residues coordinate a divalent metal cation: His-145 and His-175. The tract at residues 239 to 274 is important for dimerization; the sequence is YVEFNLVYDRGTLFGLQSGGRAESILMSLPPQVRWE. Substrate is bound at residue 257–259; sequence GGR.

This sequence belongs to the aerobic coproporphyrinogen-III oxidase family. As to quaternary structure, homodimer. A divalent metal cation serves as cofactor.

Its subcellular location is the cytoplasm. The catalysed reaction is coproporphyrinogen III + O2 + 2 H(+) = protoporphyrinogen IX + 2 CO2 + 2 H2O. It functions in the pathway porphyrin-containing compound metabolism; protoporphyrin-IX biosynthesis; protoporphyrinogen-IX from coproporphyrinogen-III (O2 route): step 1/1. Functionally, involved in the heme biosynthesis. Catalyzes the aerobic oxidative decarboxylation of propionate groups of rings A and B of coproporphyrinogen-III to yield the vinyl groups in protoporphyrinogen-IX. This chain is Oxygen-dependent coproporphyrinogen-III oxidase, found in Xanthomonas campestris pv. campestris (strain B100).